A 1857-amino-acid polypeptide reads, in one-letter code: U3 small nucleolar RNA-associated protein 10 (1857 aa).

Residues 267 to 287 (LTAYSIISVLSSLVPLSADLV) form a helical membrane-spanning segment. An HEAT repeat occupies 1817 to 1855 (LIPYIAELLEDDDEEVELEVRNGLVRVIENVLGEPLDRY).

It belongs to the HEATR1/UTP10 family. Component of the ribosomal small subunit (SSU) processome.

Its subcellular location is the nucleus. It is found in the nucleolus. The protein localises to the membrane. In terms of biological role, involved in nucleolar processing of pre-18S ribosomal RNA. Involved in ribosome biosynthesis. This is U3 small nucleolar RNA-associated protein 10 from Debaryomyces hansenii (strain ATCC 36239 / CBS 767 / BCRC 21394 / JCM 1990 / NBRC 0083 / IGC 2968) (Yeast).